Reading from the N-terminus, the 331-residue chain is Cytoplasmic envelopment protein 1 (331 aa).

The protein belongs to the herpesviridae cytoplasmic envelopment protein 1 family. In terms of assembly, interacts with protein ORF7; this interaction localizes protein ORF53 to the host trans-Golgi network (TGN).

The protein localises to the virion. The protein resides in the virion tegument. It localises to the host cytoplasm. Its subcellular location is the host Golgi apparatus. Its function is as follows. Plays a critical role in cytoplasmic virus egress. Participates in the final step of tegumentation and envelope acquisition within the host cytoplasm. The chain is Cytoplasmic envelopment protein 1 (ORF53) from Varicella-zoster virus (strain Dumas) (HHV-3).